The primary structure comprises 349 residues: NADH-quinone oxidoreductase subunit H (349 aa).

8 helical membrane-spanning segments follow: residues 11–31 (FPLLIIVGKTLLLLVILLLLV), 83–103 (GVFLLAPFVSATLALSTWAVI), 116–136 (VGLLYILAISSLEVYGVIMGG), 162–182 (IGFVLVTVILVSGSLDLTTIV), 200–220 (FLDWNWLVLFPMFIIFFISAL), 252–272 (LFFLGEYVAIVLMCALTTILF), 288–308 (VPGIIWFVLKVCFVFFWFAMV), and 323–343 (LGWKVFLPLSLAMVVITAAFL).

The protein belongs to the complex I subunit 1 family. NDH-1 is composed of 14 different subunits. Subunits NuoA, H, J, K, L, M, N constitute the membrane sector of the complex.

The protein resides in the cell inner membrane. It catalyses the reaction a quinone + NADH + 5 H(+)(in) = a quinol + NAD(+) + 4 H(+)(out). Functionally, NDH-1 shuttles electrons from NADH, via FMN and iron-sulfur (Fe-S) centers, to quinones in the respiratory chain. The immediate electron acceptor for the enzyme in this species is believed to be ubiquinone. Couples the redox reaction to proton translocation (for every two electrons transferred, four hydrogen ions are translocated across the cytoplasmic membrane), and thus conserves the redox energy in a proton gradient. This subunit may bind ubiquinone. This Bartonella henselae (strain ATCC 49882 / DSM 28221 / CCUG 30454 / Houston 1) (Rochalimaea henselae) protein is NADH-quinone oxidoreductase subunit H.